Reading from the N-terminus, the 206-residue chain is Small ribosomal subunit protein uS4 (206 aa).

The region spanning 96-157 (QRLDNVVYRM…KAKKQARIGA (62 aa)) is the S4 RNA-binding domain.

The protein belongs to the universal ribosomal protein uS4 family. In terms of assembly, part of the 30S ribosomal subunit. Contacts protein S5. The interaction surface between S4 and S5 is involved in control of translational fidelity.

Its function is as follows. One of the primary rRNA binding proteins, it binds directly to 16S rRNA where it nucleates assembly of the body of the 30S subunit. Functionally, with S5 and S12 plays an important role in translational accuracy. This chain is Small ribosomal subunit protein uS4, found in Idiomarina loihiensis (strain ATCC BAA-735 / DSM 15497 / L2-TR).